A 581-amino-acid chain; its full sequence is Probable peptidoglycan D,D-transpeptidase PenA (581 aa).

The chain crosses the membrane as a helical span at residues 28 to 48 (ISFVLMAIAVLFAGLIARGLY). Residue serine 310 is the Acyl-ester intermediate of the active site.

The protein belongs to the transpeptidase family. FtsI subfamily.

It localises to the cell inner membrane. It carries out the reaction Preferential cleavage: (Ac)2-L-Lys-D-Ala-|-D-Ala. Also transpeptidation of peptidyl-alanyl moieties that are N-acyl substituents of D-alanine.. The protein operates within cell wall biogenesis; peptidoglycan biosynthesis. Catalyzes cross-linking of the peptidoglycan cell wall at the division septum. The polypeptide is Probable peptidoglycan D,D-transpeptidase PenA (Neisseria meningitidis serogroup A / serotype 4A (strain DSM 15465 / Z2491)).